Reading from the N-terminus, the 64-residue chain is Defensin beta 4A (64 aa).

A signal peptide spans 1-23 (MRVLYLLFSFLFIFLMPLPGVFG). Cystine bridges form between Cys-31–Cys-60, Cys-38–Cys-53, and Cys-43–Cys-61. The interval 33-48 (KNGAICHPVFCPRRYK) is phosphatidylinositol 4,5-bisphosphate (PIP2) binding.

The protein belongs to the beta-defensin family. LAP/TAP subfamily. As to quaternary structure, monomer. Homodimer.

It is found in the secreted. In terms of biological role, exhibits antimicrobial activity against Gram-negative bacteria and Gram-positive bacteria, with highest activity against Gram-negative bacteria. Antimicrobial activity against P.aruginosa seems to be salt-sensitive and is reduced with high salt concentrations greater than 25 mM. Also exhibits antimicrobial activity against the yeast C.albicans. Permeabilizes C.albicans cell membranes via targeting plasma membrane lipid phosphatidylinositol 4,5-bisphosphate (PIP2), thereby leading to cell fragmentation and cell death. Acts as a ligand for C-C chemokine receptor CCR6. Binds to CCR6 and induces chemotactic activity of CCR6-expressing cells, such as immature dendritic cells and memory T cells. This chain is Defensin beta 4A (DEFB4A), found in Macaca mulatta (Rhesus macaque).